We begin with the raw amino-acid sequence, 98 residues long: MSMVYANIFLAFIMSLMGLLMYRSHLMSSLLCLEGMMLSLFVMMTVTILNNHFTLASMAPIILLVFAACEAALGLSLLVMVSNTYGTDYVQNLNLLQC.

The next 3 membrane-spanning stretches (helical) occupy residues 1-21, 29-49, and 61-81; these read MSMV…GLLM, SLLC…VTIL, and IILL…LVMV.

The protein belongs to the complex I subunit 4L family. Core subunit of respiratory chain NADH dehydrogenase (Complex I) which is composed of 45 different subunits.

Its subcellular location is the mitochondrion inner membrane. The catalysed reaction is a ubiquinone + NADH + 5 H(+)(in) = a ubiquinol + NAD(+) + 4 H(+)(out). Core subunit of the mitochondrial membrane respiratory chain NADH dehydrogenase (Complex I) which catalyzes electron transfer from NADH through the respiratory chain, using ubiquinone as an electron acceptor. Part of the enzyme membrane arm which is embedded in the lipid bilayer and involved in proton translocation. This chain is NADH-ubiquinone oxidoreductase chain 4L (MT-ND4L), found in Halichoerus grypus (Gray seal).